A 503-amino-acid polypeptide reads, in one-letter code: Arabinose import ATP-binding protein AraG 1 (503 aa).

ABC transporter domains are found at residues 5–240 (LRFD…MVGR) and 251–497 (RALG…LPQT). 37-44 (GENGAGKS) contacts ATP.

It belongs to the ABC transporter superfamily. Arabinose importer (TC 3.A.1.2.2) family. The complex is composed of two ATP-binding proteins (AraG), two transmembrane proteins (AraH) and a solute-binding protein (AraF).

It localises to the cell inner membrane. It catalyses the reaction L-arabinose(out) + ATP + H2O = L-arabinose(in) + ADP + phosphate + H(+). Part of the ABC transporter complex AraFGH involved in arabinose import. Responsible for energy coupling to the transport system. In Burkholderia ambifaria (strain ATCC BAA-244 / DSM 16087 / CCUG 44356 / LMG 19182 / AMMD) (Burkholderia cepacia (strain AMMD)), this protein is Arabinose import ATP-binding protein AraG 1.